Consider the following 283-residue polypeptide: Non-selective voltage-gated ion channel VDAC3 (283 aa).

C2 bears the N-acetylcysteine mark. T4 is subject to Phosphothreonine. N6-acetyllysine occurs at positions 12, 15, and 20. A run of 2 beta stranded transmembrane segments spans residues 26–35 (MVKIDLRTKS) and 39–47 (VEFSTSGHA). K53 is covalently cross-linked (Glycyl lysine isopeptide (Lys-Gly) (interchain with G-Cter in ubiquitin)). The next 3 membrane-spanning stretches (beta stranded) occupy residues 54-64 (ASGNLETKYKV), 69-76 (LTFTQKWN), and 80-89 (TLGTEISLEN). The residue at position 90 (K90) is an N6-acetyllysine. A beta stranded membrane pass occupies residues 95-104 (LKLTLDTIFV). Glycyl lysine isopeptide (Lys-Gly) (interchain with G-Cter in ubiquitin) cross-links involve residues K109 and K110. 10 beta stranded membrane passes run 111-120 (SGKLKASYKR), 123-130 (FSLGSNVD), 137-145 (TIYGWAVLA), 150-158 (LAGYQMSFD), 163-175 (KLSQNNFALGYKA), 178-185 (FQLHTHVN), 189-198 (EFGGSIYQKV), 202-211 (IETSINLAWT), 218-227 (RFGIAAKYKL), and 231-238 (TSLSAKVN). At S241 the chain carries Phosphoserine. Residues 242–244 (LIG) and 260–264 (SALID) contribute to the NAD(+) site. 2 beta stranded membrane passes run 242–251 (LIGLGYTQTL) and 254–263 (GVKLTLSALI). An N6-acetyllysine; alternate modification is found at K266. K266 participates in a covalent cross-link: Glycyl lysine isopeptide (Lys-Gly) (interchain with G-Cter in ubiquitin); alternate. A beta stranded membrane pass occupies residues 273-282 (HKVGLGFELE).

This sequence belongs to the eukaryotic mitochondrial porin family. Interacts with ARMC12 in a TBC1D21-dependent manner. Interacts with MISFA. Post-translationally, ubiquitinated by PRKN during mitophagy, leading to its degradation and enhancement of mitophagy. Deubiquitinated by USP30.

The protein resides in the mitochondrion outer membrane. Its subcellular location is the membrane. It catalyses the reaction chloride(in) = chloride(out). It carries out the reaction K(+)(in) = K(+)(out). Its function is as follows. Non-selective voltage-gated ion channel that mediates the transport of anions and cations through the mitochondrion outer membrane and plasma membrane. Forms a high-conducting channel with a stable open state and a voltage-induced closure with a mild preference for anions over cations. Involved in male fertility and sperm mitochondrial sheath formation. The chain is Non-selective voltage-gated ion channel VDAC3 from Oryctolagus cuniculus (Rabbit).